Consider the following 232-residue polypeptide: Small ribosomal subunit protein uS3 (232 aa).

Positions 39 to 107 constitute a KH type-2 domain; sequence IREILHKELK…DVVINIVEIR (69 aa).

This sequence belongs to the universal ribosomal protein uS3 family. Part of the 30S ribosomal subunit. Forms a tight complex with proteins S10 and S14.

Functionally, binds the lower part of the 30S subunit head. Binds mRNA in the 70S ribosome, positioning it for translation. The sequence is that of Small ribosomal subunit protein uS3 from Rhodopseudomonas palustris (strain BisB18).